Here is a 312-residue protein sequence, read N- to C-terminus: Lipoyl synthase (312 aa).

[4Fe-4S] cluster is bound by residues Cys37, Cys42, Cys48, Cys67, Cys71, Cys74, and Ser281. The Radical SAM core domain occupies 52–270 (RDGPGTATFM…AVAEREFDFL (219 aa)).

The protein belongs to the radical SAM superfamily. Lipoyl synthase family. The cofactor is [4Fe-4S] cluster.

It is found in the cytoplasm. The catalysed reaction is [[Fe-S] cluster scaffold protein carrying a second [4Fe-4S](2+) cluster] + N(6)-octanoyl-L-lysyl-[protein] + 2 oxidized [2Fe-2S]-[ferredoxin] + 2 S-adenosyl-L-methionine + 4 H(+) = [[Fe-S] cluster scaffold protein] + N(6)-[(R)-dihydrolipoyl]-L-lysyl-[protein] + 4 Fe(3+) + 2 hydrogen sulfide + 2 5'-deoxyadenosine + 2 L-methionine + 2 reduced [2Fe-2S]-[ferredoxin]. The protein operates within protein modification; protein lipoylation via endogenous pathway; protein N(6)-(lipoyl)lysine from octanoyl-[acyl-carrier-protein]: step 2/2. Its function is as follows. Catalyzes the radical-mediated insertion of two sulfur atoms into the C-6 and C-8 positions of the octanoyl moiety bound to the lipoyl domains of lipoate-dependent enzymes, thereby converting the octanoylated domains into lipoylated derivatives. This Halorubrum lacusprofundi (strain ATCC 49239 / DSM 5036 / JCM 8891 / ACAM 34) protein is Lipoyl synthase.